The chain runs to 134 residues: MCDVVYFSTQSGNTRRFVEKLDVPAQRIPRSRNDAPLRVTRPYVLILPTYGDGDPRTAVPGPVIRFLNDPRNRALIQGVVAGGNTNFGAAFGLAGRVVAHKCEVPLLHRFELMGTPEDVAKVRACLAMEMTDVG.

This sequence belongs to the NrdI family.

Its function is as follows. Probably involved in ribonucleotide reductase function. In Chromohalobacter salexigens (strain ATCC BAA-138 / DSM 3043 / CIP 106854 / NCIMB 13768 / 1H11), this protein is Protein NrdI.